A 253-amino-acid polypeptide reads, in one-letter code: Succinate dehydrogenase iron-sulfur subunit (253 aa).

3 residues coordinate [2Fe-2S] cluster: C64, C69, and C84. Residues 146-174 enclose the 4Fe-4S ferredoxin-type domain; the sequence is RQWAYELSKCMTCGVCLEACPNVNSKSKF. Positions 155, 158, and 161 each coordinate [4Fe-4S] cluster. [3Fe-4S] cluster contacts are provided by C165, C212, and C218. Position 222 (C222) interacts with [4Fe-4S] cluster.

It belongs to the succinate dehydrogenase/fumarate reductase iron-sulfur protein family. As to quaternary structure, in B.subtilis succinate dehydrogenase forms part of an enzyme complex containing three subunits: a flavoprotein, an iron-sulfur protein and cytochrome b-558. Requires [2Fe-2S] cluster as cofactor. The cofactor is [3Fe-4S] cluster. It depends on [4Fe-4S] cluster as a cofactor.

The enzyme catalyses a quinone + succinate = fumarate + a quinol. It participates in carbohydrate metabolism; tricarboxylic acid cycle; fumarate from succinate (bacterial route): step 1/1. This is Succinate dehydrogenase iron-sulfur subunit (sdhB) from Bacillus subtilis (strain 168).